Reading from the N-terminus, the 397-residue chain is Kappa-carrageenase (397 aa).

The signal sequence occupies residues 1 to 25; the sequence is MKPISIVAFPIPAISMLLLSAVSQA. In terms of domain architecture, GH16 spans 26 to 299; sequence ASMQPPIAKP…YVRTWVKVGN (274 aa). A disulfide bond links cysteine 98 and cysteine 268. The active-site Nucleophile is glutamate 163. Aspartate 165 is an active-site residue. Glutamate 168 functions as the Proton donor in the catalytic mechanism. Positions 316–387 constitute a BIG2 domain; the sequence is AVNSVQLSAA…TITVKTKNKG (72 aa).

This sequence belongs to the glycosyl hydrolase 16 family.

Its subcellular location is the periplasm. The catalysed reaction is Endohydrolysis of (1-&gt;4)-beta-D-linkages between D-galactose 4-sulfate and 3,6-anhydro-D-galactose in kappa-carrageenans.. The protein is Kappa-carrageenase (cgkA) of Pseudoalteromonas carrageenovora (Alteromonas carrageenovora).